Reading from the N-terminus, the 150-residue chain is NADH-quinone oxidoreductase subunit A (150 aa).

3 helical membrane-spanning segments follow: residues W14 to A34, L70 to V90, and L98 to V118.

Belongs to the complex I subunit 3 family. In terms of assembly, NDH-1 is composed of 13 different subunits. Subunits NuoA, H, J, K, L, M, N constitute the membrane sector of the complex.

Its subcellular location is the cell inner membrane. It catalyses the reaction a quinone + NADH + 5 H(+)(in) = a quinol + NAD(+) + 4 H(+)(out). NDH-1 shuttles electrons from NADH, via FMN and iron-sulfur (Fe-S) centers, to quinones in the respiratory chain. The immediate electron acceptor for the enzyme in this species is believed to be ubiquinone. Couples the redox reaction to proton translocation (for every two electrons transferred, four hydrogen ions are translocated across the cytoplasmic membrane), and thus conserves the redox energy in a proton gradient. The sequence is that of NADH-quinone oxidoreductase subunit A from Proteus mirabilis (strain HI4320).